Consider the following 803-residue polypeptide: MKFSESWIREWVNPPIDHDQLIDQFTLAGLNVEESRKLNSNKFYGIVIAKIIECQVHPSLADTWIMTVNSGGGNIINIITNNMNYNKNTKVVVANIGAILPNGNIIKQINIQGRKSEGVLCTFSMLGLNYYTQKGIIELPIDAPIGCNFYDYLHFNDNIIDINITPNRGDCLSVIGLSREIAAINQCKLKKINIKSNVPNILDTIPIIIETPHDCPKFLGKVLKNIDITIPTPLKIQEKLIRCGIQPINIITDIANYVLLELGQPVRIFDYEKIDKNIIYVRFSKPGETLTLSENNINIKLFSKTLVISDVRKPLAIAGVITGNQSSVSCSTHNIFLKVAFFNPLTIINQYKLYNLYTSSVVRYEKGIDPDISELALNYATSLLIKYCHGKAGPTINIISHNHLPKIKIIKLHRSKLNMILGFYIPDQKIINILTNLGFQVETQGHNWIVSTPSWRFDINIEENVISEIIRIYGYNHIPKIPAKISLNQTVQCIPNQVISLSKSKTVLIARGYQEIITYSFVDPNIQKLLHPQCIPLTLMNPISTNMSVMRLSLWTGLIQTMLYNQNRQHKNIKLFESGICFIPKNSHSKQVSQQLRLSGIRSGLRHYEHWDIHTSLTDFYDIKGDVESILYLFNKKNQNNNIHFKSCTYPALHPGQSAEIYLNDIFLGYVGVIHPMIQYKLRIHSNVLVFELIWDSIVNIKSQKIIDISKFPKNYRDISLIIPTHISASSVIETCKKIGIINLTEVKLIDVYTGRNIPTNFKSLTIKLTLQSKTHTLKEQEIKEIIIICTTTLKKHFNAIFR.

Residues 40 to 150 (SNKFYGIVIA…IDAPIGCNFY (111 aa)) form the tRNA-binding domain. The B5 domain maps to 405-480 (PKIKIIKLHR…RIYGYNHIPK (76 aa)). Aspartate 458 and glutamate 468 together coordinate Mg(2+). The 94-residue stretch at 710-803 (SKFPKNYRDI…LKKHFNAIFR (94 aa)) folds into the FDX-ACB domain.

It belongs to the phenylalanyl-tRNA synthetase beta subunit family. Type 1 subfamily. In terms of assembly, tetramer of two alpha and two beta subunits. Requires Mg(2+) as cofactor.

The protein resides in the cytoplasm. It catalyses the reaction tRNA(Phe) + L-phenylalanine + ATP = L-phenylalanyl-tRNA(Phe) + AMP + diphosphate + H(+). This chain is Phenylalanine--tRNA ligase beta subunit, found in Blochmanniella floridana.